Consider the following 391-residue polypeptide: NADH-quinone oxidoreductase subunit D (391 aa).

Belongs to the complex I 49 kDa subunit family. In terms of assembly, NDH-1 is composed of 14 different subunits. Subunits NuoB, C, D, E, F, and G constitute the peripheral sector of the complex.

It is found in the cell inner membrane. It catalyses the reaction a quinone + NADH + 5 H(+)(in) = a quinol + NAD(+) + 4 H(+)(out). In terms of biological role, NDH-1 shuttles electrons from NADH, via FMN and iron-sulfur (Fe-S) centers, to quinones in the respiratory chain. The immediate electron acceptor for the enzyme in this species is believed to be ubiquinone. Couples the redox reaction to proton translocation (for every two electrons transferred, four hydrogen ions are translocated across the cytoplasmic membrane), and thus conserves the redox energy in a proton gradient. This chain is NADH-quinone oxidoreductase subunit D, found in Rickettsia conorii (strain ATCC VR-613 / Malish 7).